The sequence spans 412 residues: Serine hydroxymethyltransferase (412 aa).

(6S)-5,6,7,8-tetrahydrofolate contacts are provided by residues Leu117 and 121–123; that span reads GHL. N6-(pyridoxal phosphate)lysine is present on Lys226.

This sequence belongs to the SHMT family. As to quaternary structure, homodimer. It depends on pyridoxal 5'-phosphate as a cofactor.

It is found in the cytoplasm. It catalyses the reaction (6R)-5,10-methylene-5,6,7,8-tetrahydrofolate + glycine + H2O = (6S)-5,6,7,8-tetrahydrofolate + L-serine. It participates in one-carbon metabolism; tetrahydrofolate interconversion. The protein operates within amino-acid biosynthesis; glycine biosynthesis; glycine from L-serine: step 1/1. Catalyzes the reversible interconversion of serine and glycine with tetrahydrofolate (THF) serving as the one-carbon carrier. This reaction serves as the major source of one-carbon groups required for the biosynthesis of purines, thymidylate, methionine, and other important biomolecules. Also exhibits THF-independent aldolase activity toward beta-hydroxyamino acids, producing glycine and aldehydes, via a retro-aldol mechanism. The chain is Serine hydroxymethyltransferase from Staphylococcus haemolyticus (strain JCSC1435).